A 544-amino-acid polypeptide reads, in one-letter code: MPMETETNQGDLIFRSKLPDIYIPKHLPLHSYCFENISEFSSRPCLINGANNHIYTYADVELTSRKVAAGLNKLGIQQKDTIMILLPNSPEFVFAFMGASYLGAISTMANPLFTPAEVVKQAKASNAKLIITQACFVNKVKDYAFDNNLNVICIDSAPEGCIHFSELTQADEHDIPDVKIQSDDVVALPYSSGTTGLPKGVMLTHKGLVTSVAQQVDGENANLYMHSEDVLMCVLPLFHIYSLNSVLLCGLRVGAAILIMQKFDIVQFCELIEKYKVTIGPFVPPIVLAIAKSPVVDNYDLSSVRTVMSGAAPLGKELEDAVRIKFPNAKLGQGYGMTEAGPVLAMCLAFAKEPFDIKSGACGTVVRNAEMKIVDPDTGCSLPRNQPGEICIRGDQIMKGYLNDPAATTRTIDKEGWLHTGDIGYIDNDDELFIVDRLKELIKYKGFQVAPAELEALLLNHPNISDAAVVPMKDEQAGEVPVAFVVRSNGSDITEDEVKDFVSKQVIFYKRIKRVFFVETVPKSPSGKILRKDLRARLAAGVPN.

It belongs to the ATP-dependent AMP-binding enzyme family. Monomer. Mostly expressed in flower organs, with highest levels in corollas, and, to a lesser extent, in tubes, sepals, pistils, stamen and ovaries. Also present at low levels in leaves.

The protein localises to the cytoplasm. The protein resides in the cytosol. The enzyme catalyses (E)-4-coumarate + ATP + CoA = (E)-4-coumaroyl-CoA + AMP + diphosphate. It catalyses the reaction (E)-caffeate + ATP + CoA = (E)-caffeoyl-CoA + AMP + diphosphate. The catalysed reaction is benzoate + ATP + CoA = benzoyl-CoA + AMP + diphosphate. It carries out the reaction (E)-cinnamate + ATP + CoA = (E)-cinnamoyl-CoA + AMP + diphosphate. The enzyme catalyses (E)-ferulate + ATP + CoA = (E)-feruloyl-CoA + AMP + diphosphate. It participates in phenylpropanoid metabolism; trans-cinnamate biosynthesis. The protein operates within phytoalexin biosynthesis; 3,4',5-trihydroxystilbene biosynthesis; 3,4',5-trihydroxystilbene from trans-4-coumarate: step 1/2. Functionally, catalyzes the formation of CoA esters of trans-cinnamic acid, 4-coumaric acid, ferulic acid, benzoic acid and caffeic acid. This Petunia hybrida (Petunia) protein is 4-coumarate:CoA ligase 1.